The primary structure comprises 142 residues: Large ribosomal subunit protein uL11 (142 aa).

This sequence belongs to the universal ribosomal protein uL11 family. Part of the ribosomal stalk of the 50S ribosomal subunit. Interacts with L10 and the large rRNA to form the base of the stalk. L10 forms an elongated spine to which L12 dimers bind in a sequential fashion forming a multimeric L10(L12)X complex. One or more lysine residues are methylated.

Forms part of the ribosomal stalk which helps the ribosome interact with GTP-bound translation factors. This chain is Large ribosomal subunit protein uL11, found in Mycoplasma capricolum subsp. capricolum (strain California kid / ATCC 27343 / NCTC 10154).